Reading from the N-terminus, the 143-residue chain is Large ribosomal subunit protein bL17 (143 aa).

The protein belongs to the bacterial ribosomal protein bL17 family. Part of the 50S ribosomal subunit. Contacts protein L32.

The protein is Large ribosomal subunit protein bL17 of Chelativorans sp. (strain BNC1).